The sequence spans 734 residues: Platelet glycoprotein Ib alpha chain (734 aa).

An N-terminal signal peptide occupies residues 1 to 16 (MALLILLFLLPSPLHS). The region spanning 17-47 (QHTCSISKVTSLLEVNCENKKLTALPADLPA) is the LRRNT domain. The Extracellular segment spans residues 17–612 (QHTCSISKVT…LNSDFCCFLP (596 aa)). Cysteines 20 and 33 form a disulfide. 7 LRR repeats span residues 48–69 (DTGILHLGENQLGTFSTASLVH), 72–93 (HLTYLYLDRCELTSLQTNGKLI), 94–115 (KLENLDLSHNNLKSLPSLGWAL), 117–140 (ALTTLDVSFNKLGSLSPGVLDGLS), 141–162 (QLQELYLQNNDLKSLPPGLLLP), 165–188 (KLKKLNLANNKLRELPSGLLDGLE), and 189–210 (DLDTLYLQRNWLRTIPKGFFGT). The LRRCT domain maps to 221–282 (NSWYCDCEIL…YSYPGKGCPT (62 aa)). Disulfide bonds link cysteine 225-cysteine 264 and cysteine 227-cysteine 280. Tyrosine 292 carries the sulfotyrosine modification. O-linked (GalNAc...) threonine glycosylation is found at threonine 301, threonine 311, threonine 315, and threonine 316. Serine 335 carries O-linked (GalNAc...) serine glycosylation. O-linked (GalNAc...) threonine glycosylation is found at threonine 339, threonine 348, threonine 358, and threonine 377. The O-linked (GalNAc...) serine glycan is linked to serine 382. Residues threonine 384, threonine 385, and threonine 405 are each glycosylated (O-linked (GalNAc...) threonine). Disordered stretches follow at residues 406 to 429 (STLTTPEHSTTPVPTTTILTTPEH) and 460 to 526 (EPST…PEPS). Residues threonine 512, threonine 516, threonine 519, threonine 530, threonine 542, threonine 546, threonine 550, and threonine 562 are each glycosylated (O-linked (GalNAc...) threonine). The O-linked (GalNAc...) serine glycan is linked to serine 572. Threonine 573 carries O-linked (GalNAc...) threonine glycosylation. The chain crosses the membrane as a helical span at residues 613–633 (LGFYVLGLLWLLFASVVLILL). Over 634-734 (LTWTWHVTPH…VGIRYSGHSL (101 aa)) the chain is Cytoplasmic. Phosphoserine occurs at positions 711 and 714.

As to quaternary structure, two GP-Ib beta are disulfide-linked to one GP-Ib alpha. GP-IX is complexed with the GP-Ib heterodimer via a non covalent linkage. Interacts with FLNB. Interacts with FLNA (via filamin repeats 4, 9, 12, 17, 19, 21, and 23). In terms of processing, O-glycosylated. Post-translationally, glycocalicin is the product of a proteolytic cleavage/shedding, catalyzed by ADAM17, which releases most of the extracellular domain. Binding sites for vWF and thrombin are in this part of the protein.

The protein localises to the membrane. Functionally, GP-Ib, a surface membrane protein of platelets, participates in the formation of platelet plugs by binding to the A1 domain of vWF, which is already bound to the subendothelium. This Mus musculus (Mouse) protein is Platelet glycoprotein Ib alpha chain (Gp1ba).